A 712-amino-acid chain; its full sequence is BTB/POZ domain-containing protein 18 (712 aa).

Residues 34 to 102 (CDVLLQAEGE…LYTSEMEVSQ (69 aa)) form the BTB domain. Disordered regions lie at residues 157-176 (VTPS…PCPL), 212-355 (RACP…EGQV), and 374-410 (ETPL…QEMS). Polar residues predominate over residues 218–228 (QEKNSSPSSHS). Over residues 229 to 238 (QEPRENKNDT) the composition is skewed to basic and acidic residues. The span at 277–288 (SKPSSILSGSSS) shows a compositional bias: low complexity. The span at 303–313 (VNKETPEDKPK) shows a compositional bias: basic and acidic residues. Polar residues predominate over residues 396 to 410 (PSGTQPFSSNEQEMS). 3 positions are modified to phosphoserine: Ser420, Ser671, and Ser672. Disordered regions lie at residues 653-676 (KAGK…EEEE) and 691-712 (TTVP…DILT). Over residues 702-712 (SESETEVDILT) the composition is skewed to acidic residues.

Its subcellular location is the nucleus. Specifically required during spermatogenesis to promote expression of piRNA precursors. The piRNA metabolic process mediates the repression of transposable elements during meiosis by forming complexes composed of piRNAs and Piwi proteins and governs the methylation and subsequent repression of transposons, which is essential for the germline integrity. Acts by facilitating transcription elongation at piRNA loci during pachytene. The chain is BTB/POZ domain-containing protein 18 from Homo sapiens (Human).